A 699-amino-acid chain; its full sequence is Elongation factor G (699 aa).

The 283-residue stretch at 8-290 (ERYRNIGIMA…AVLDYLPSPV (283 aa)) folds into the tr-type G domain. Residues 17-24 (AHIDAGKT), 88-92 (DTPGH), and 142-145 (NKMD) each bind GTP.

Belongs to the TRAFAC class translation factor GTPase superfamily. Classic translation factor GTPase family. EF-G/EF-2 subfamily.

The protein localises to the cytoplasm. Catalyzes the GTP-dependent ribosomal translocation step during translation elongation. During this step, the ribosome changes from the pre-translocational (PRE) to the post-translocational (POST) state as the newly formed A-site-bound peptidyl-tRNA and P-site-bound deacylated tRNA move to the P and E sites, respectively. Catalyzes the coordinated movement of the two tRNA molecules, the mRNA and conformational changes in the ribosome. The polypeptide is Elongation factor G (Acidithiobacillus ferrooxidans (strain ATCC 23270 / DSM 14882 / CIP 104768 / NCIMB 8455) (Ferrobacillus ferrooxidans (strain ATCC 23270))).